A 206-amino-acid chain; its full sequence is Carbonic anhydrase (206 aa).

An Isoglutamyl lysine isopeptide (Lys-Gln) (interchain with Q-Cter in protein Pup) cross-link involves residue lysine 11. Zn(2+) contacts are provided by cysteine 51, aspartate 53, histidine 104, and cysteine 107.

Belongs to the beta-class carbonic anhydrase family. Homotetramer. The cofactor is Zn(2+).

The catalysed reaction is hydrogencarbonate + H(+) = CO2 + H2O. Catalyzes the reversible hydration of carbon dioxide to form bicarbonate. This chain is Carbonic anhydrase (cynT), found in Mycolicibacterium smegmatis (strain ATCC 700084 / mc(2)155) (Mycobacterium smegmatis).